Here is a 219-residue protein sequence, read N- to C-terminus: Claudin-3 (219 aa).

The Cytoplasmic segment spans residues 1–8; that stretch reads MSMGLEIT. A helical transmembrane segment spans residues 9–29; the sequence is GTSLAVLGWLCTIVCCALPMW. Residues 30-80 are Extracellular-facing; it reads RVSAFIGSSIITAQITWEGLWMNCVVQSTGQMQCKMYDSLLALPQDLQAAR. The chain crosses the membrane as a helical span at residues 81-101; the sequence is ALIVVSILLAAFGLLVALVGA. Over 102–115 the chain is Cytoplasmic; that stretch reads QCTNCVQDETAKAK. The chain crosses the membrane as a helical span at residues 116–136; sequence ITIVAGVLFLLAAVLTLVPVS. The Extracellular segment spans residues 137 to 161; the sequence is WSANTIIRDFYNPLVPEAQKREMGT. The helical transmembrane segment at 162-182 threads the bilayer; sequence GLYVGWAAAALQLLGGALLCC. Residues 183 to 219 are Cytoplasmic-facing; the sequence is SCPPREKYAPTKILYSAPRSTGPGTGTGTAYDRKDYV. At Tyr-197 the chain carries Phosphotyrosine. At Ser-198 the chain carries Phosphoserine. Residues 218–219 are interactions with TJP1, TJP2 and TJP3; it reads YV.

This sequence belongs to the claudin family. In terms of assembly, can form homo- and heteropolymers with other CLDN. Homopolymers interact with CLDN1 and CLDN2 homopolymers. Interacts in cis (within the same plasma membrane) with CLDN19. Directly interacts with TJP1/ZO-1, TJP2/ZO-2 and TJP3/ZO-3.

The protein localises to the cell junction. It localises to the tight junction. Its subcellular location is the cell membrane. Its function is as follows. Plays a major role in tight junction-specific obliteration of the intercellular space, through calcium-independent cell-adhesion activity. The sequence is that of Claudin-3 (Cldn3) from Rattus norvegicus (Rat).